The chain runs to 510 residues: Insulinoma-associated protein 1 (510 aa).

The span at 1-12 (MPRGFLVKRSKK) shows a compositional bias: basic residues. The interval 1–20 (MPRGFLVKRSKKSTPVSYRV) is SNAG domain. Disordered stretches follow at residues 1–110 (MPRG…SREH) and 176–226 (GAEA…PKAI). A required and sufficient for interaction with KDM1A region spans residues 2–7 (PRGFLV). The tract at residues 43-58 (PPAPSPVPGPLPPPPP) is necessary for interaction with CCND1. The span at 43-59 (PPAPSPVPGPLPPPPPA) shows a compositional bias: pro residues. Composition is skewed to low complexity over residues 64-74 (AALAAALACAP) and 209-218 (EPPAKAVKAP). A C2H2-type 1; atypical zinc finger spans residues 267 to 287 (FICQLCKEEYADPFALAQHKC). The C2H2-type 2 zinc finger occupies 295–317 (YRCPECAKVFSCPANLASHRRWH). The segment at 315 to 362 (RWHKPRPAPAAARAPEPEAAARAEAREAPGGGSDRDTPSPGGVSESGS) is disordered. Basic and acidic residues predominate over residues 329-351 (PEPEAAARAEAREAPGGGSDRDT). 3 C2H2-type zinc fingers span residues 367-389 (YECH…LLAH), 441-464 (HLCP…RLLH), and 469-492 (FPCK…NKCH).

It belongs to the INSM1 family. In terms of assembly, interacts (via the SNAG domain) with HDAC1. Interacts (via the SNAG domain) with HDAC2. Interacts (via the SNAG domain) with KDM1A. Interacts (via the SNAG domain) with RCOR1. Interacts with SORBS1. Interacts (via the N-terminal region) with CCND1 (via cyclin N-terminal domain); the interaction competes with the binding of CCND1 to CDK4 during cell cycle progression and increases its transcriptional repressor activity. Interacts with HDAC3; the interaction increases its transcriptional repressor activity. As to expression, expressed in pancreatic duct cells. Expressed in several tumor cell lines of neuroendocrine origin including pheochromocytoma, medullary thyroid carcinoma, insulinoma, medulloblastoma, retinoblastoma, pheochromacytoma, medullary thyroid carcinoma and small cell lung carcinoma.

It localises to the nucleus. Functionally, sequence-specific DNA-binding transcriptional regulator that plays a key role in neurogenesis and neuroendocrine cell differentiation during embryonic and/or fetal development. Binds to the consensus sequence 5'-[TG][TC][TC][TT][GA]GGG[CG]A-3' in target promoters. Acts as a transcriptional repressor of NEUROD1 and INS expression via its interaction with cyclin CCND1 in a cell cycle-independent manner. Negatively regulates skeletal muscle-specific gene expression in endocrine cells of the pituitary by inhibiting the Notch signaling pathway. Represses target gene transcription by recruiting chromatin-modifying factors, such as HDAC1, HDAC2, HDAC3, KDM1A and RCOR1 histone deacetylases. Binds to its own promoter, suggesting autoregulation as a self-control feedback mechanism. Competes with histone H3 for the same binding site on the histone demethylase complex formed by KDM1A and RCOR1, and thereby inhibits demethylation of histone H3 at 'Lys-4'. Promotes the generation and expansion of neuronal basal progenitor cells in the developing neocortex. Involved in the differentiation of endocrine cells of the developing anterior pituitary gland, of the pancreas and intestine, and of sympatho-adrenal cells in the peripheral nervous system. Promotes cell cycle signaling arrest and inhibition of cellular proliferation. The protein is Insulinoma-associated protein 1 (INSM1) of Homo sapiens (Human).